A 174-amino-acid chain; its full sequence is uncharacterized protein (174 aa).

This is an uncharacterized protein from Mycobacterium tuberculosis (strain CDC 1551 / Oshkosh).